We begin with the raw amino-acid sequence, 2050 residues long: MFNLMKKDKDKDGGRKEKKEKKEKKERMSAAELRSLEEMSMRRGFFNLNRSSKRESKTRLEISNPIPIKVASGSDLHLTDIDSDSNRGSIILDSGHLSTASSSDDLKGEEGSFRGSVLQRAAKFGSLAKQNSQMIVKRFSFSQRSRDESASETSTPSEHSAAPSPQVEVRTLEGQLMQHPGLGIPRPGPRSRVPELVTKRFPADLRLPALVPPPPPALRELELQRRPTGDFGFSLRRTTMLDRAPEGQAYRRVVHFAEPGAGTKDLALGLVPGDRLVEINGQNVENKSRDEIVEMIRQSGDSVRLKVQPIPELSELSRSWLRTGEGHRREPADAKTEEQIAAEEAWYETEKVWLVHRDGFSLASQLKSEELSLPEGKARVKLDHDGAILDVDEDDIEKANAPSCDRLEDLASLVYLNESSVLHTLRQRYGASLLHTYAGPSLLVLSTRGAPAVYSEKVMHMFKGCRREDMAPHIYAVAQTAYRAMLMSRQDQSIVLLGSSGSGKTTSFQHLVQYLATIAGTSGTKVFSVEKWQALSTLLEAFGNSPTIMNGSATRFSQILSLDFDQAGQVASASIQTMLLEKLRVARRPASEATFNVFYYLLACGDATLRTELHLNHLAENNVFGIVPLSKPEEKQKAAQQFSKLQAAMKVLAISPEEQKTCWLILASIYHLGAAGATKEAAEAGRKQFARHEWAQKAAYLLGCSLEELSSAIFKHQLKGGTLQRSTSFRQGPEESGLGEGTKLSALECLEGMASGLYSELFTLLISLVNRALKSSQHSLCSMMIVDTPGFQNPEWGGSARGASFEELCHNYAQDRLQRLFHERTFLQELERYKEDNIELAFDDLEPVADDSVAAVDQASHLVRSLAHADEARGLLWLLEEEALVPGATEDALLDRLFSYYGPQEGDKKGQSPLLRSSKPRHFLLGHSHGTNWVEYNVAGWLNYTKQNPATQNAPRLLQDSQKKIISNLFLGRAGSATVLSGSIAGLEGGSQLALRRATSMRKTFTTGMAAVKKKSLCIQIKLQVDALIDTIKRSKMHFVHCFLPVAEGWPGEPRSASSRRVSSSSELDLPPGDPCEAGLLQLDVSLLRAQLRGSRLLDAMRMYRQGYPDHMVFSEFRRRFDVLAPHLTKKHGRNYIVVDEKRAVEELLESLDLEKSSCCLGLSRVFFRAGTLARLEEQRDEQTSRHLTLFQAACRGYLARQHFKKRKIQDLAIRCVQKNIKKNKGVKDWPWWKLFTTVRPLIQVQLSEEQIRNKDEEIQQLRSKLEKVEKERNELRLSSDRLETRISELTSELTDERNTGESASQLLDAETAERLRTEKEMKELQTQYDALKKQMEVMEMEVMEARLIRAAEINGEVDDDDAGGEWRLKYERAVREVDFTKKRLQQELEDKMEVEQQSRRQLERRLGDLQADSDESQRALQQLKKKCQRLTAELQDTKLHLEGQQVRNHELEKKQRRFDSELSQAHEETQREKLQREKLQREKDMLLAEAFSLKQQMEEKDLDIAGFTQKVVSLEAELQDISSQESKDEASLAKVKKQLRDLEAKVKDQEEELDEQAGSIQMLEQAKLRLEMEMERMRQTHSKEMESRDEEVEEARQSCQKKLKQMEVQLEEEYEDKQKALREKRELESKLSTLSDQVNQRDFESEKRLRKDLKRTKALLADAQIMLDHLKNNAPSKREIAQLKNQLEESEFTCAAAVKARKAMEVEMEDLHLQIDDIAKAKTALEEQLSRLQREKNEIQNRLEEDQEDMNELMKKHKAAVAQASRDMAQMNDLQAQIEESNKEKQELQEKLQALQSQVEFLEQSMVDKSLVSRQEAKIRELETRLEFEKTQVKRLENLASRLKETMEKLTEERDQRAAAENREKEQNKRLQRQLRDTKEEMSELARKEAEASRKKHELEMDLESLEAANQSLQADLKLAFKRIGDLQAAIEDEMESDENEDLINSLQDMVTKYQKKKNKLEGDSDVDSELEDRVDGVKSWLSKNKGPSKAPSDDGSLKSSSPTSHWKPLAPDPSDDEHDPVDSISRPRFSHSYLSDSDTEAKLTETSA.

2 stretches are compositionally biased toward basic and acidic residues: residues 1–17 (MFNL…GRKE) and 23–34 (EKKERMSAAELR). A disordered region spans residues 1–34 (MFNLMKKDKDKDGGRKEKKEKKEKKERMSAAELR). The mediates nucleotide-independent binding to F-actin and interaction with GOLPH3 stretch occupies residues 1 to 398 (MFNLMKKDKD…LDVDEDDIEK (398 aa)). Phosphoserine is present on residues serine 35, serine 52, serine 72, and serine 74. Position 79 is a phosphothreonine (threonine 79). Serine 83 and serine 98 each carry phosphoserine. Threonine 99 is modified (phosphothreonine). Serine 102 and serine 103 each carry phosphoserine. Residues 114 to 118 (RGSVL) carry the Interaction with actin motif. Phosphoserine is present on residues serine 140, serine 145, serine 157, serine 160, serine 164, serine 234, and isoleucine 340. The disordered stretch occupies residues 140-167 (SFSQRSRDESASETSTPSEHSAAPSPQV). The 92-residue stretch at 220-311 (ELELQRRPTG…SVRLKVQPIP (92 aa)) folds into the PDZ domain. The 53-residue stretch at 349-401 (TEKVWLVHRDGFSLASQLKSEELSLPEGKARVKLDHDGAILDVDEDDIEKANA) folds into the Myosin N-terminal SH3-like domain. In terms of domain architecture, Myosin motor spans 405-1181 (DRLEDLASLV…TLARLEEQRD (777 aa)). 498–505 (GSSGSGKT) provides a ligand contact to ATP. Serine 983, serine 1063, serine 1064, and serine 1066 each carry phosphoserine. The disordered stretch occupies residues 1051–1071 (PGEPRSASSRRVSSSSELDLP). Residues 1055 to 1066 (RSASSRRVSSSS) are compositionally biased toward low complexity. In terms of domain architecture, IQ spans 1184-1213 (TSRHLTLFQAACRGYLARQHFKKRKIQDLA). Residues 1242–1967 (LIQVQLSEEQ…KKNKLEGDSD (726 aa)) adopt a coiled-coil conformation. The tract at residues 1448 to 1477 (RNHELEKKQRRFDSELSQAHEETQREKLQR) is disordered. Serine 1636 bears the Phosphoserine mark. The segment at 1848–1897 (MEKLTEERDQRAAAENREKEQNKRLQRQLRDTKEEMSELARKEAEASRKK) is disordered. Serine 1938, serine 1966, serine 1970, serine 1994, serine 1998, serine 2002, serine 2003, serine 2016, serine 2032, serine 2037, and serine 2039 each carry phosphoserine. The interval 1955 to 2050 (YQKKKNKLEG…TEAKLTETSA (96 aa)) is disordered. Threonine 2041 carries the phosphothreonine modification. The span at 2041 to 2050 (TEAKLTETSA) shows a compositional bias: basic and acidic residues.

It belongs to the TRAFAC class myosin-kinesin ATPase superfamily. Myosin family. As to quaternary structure, homodimer. Forms a tripartite complex with CDC42BPA/CDC42BPB and LURAP1 with the latter acting as an adapter connecting CDC42BPA/CDC42BPB and MYO18A. Binds F-actin; regulated by ADP and GOLPH3. Interacts with GOLPH3; the interaction is direct and may link Golgi membranes to the actin cytoskeleton. Interacts with JAK3. Interacts with MSR1 and CD14. In terms of processing, phosphorylated on tyrosine upon CSF1R activation. Isoform 6 is phosphorylated on Ser-340. As to expression, isoform 1; Expressed ubiquitously. Isoform 2: Specifically expressed in most hematopoietic cells. Isoform 3: Predominantly expressed in alveolar macrophages.

The protein localises to the golgi apparatus. Its subcellular location is the trans-Golgi network. The protein resides in the golgi outpost. It is found in the cytoplasm. It localises to the cytoskeleton. The protein localises to the microtubule organizing center. Its subcellular location is the endoplasmic reticulum-Golgi intermediate compartment. Functionally, may link Golgi membranes to the cytoskeleton and participate in the tensile force required for vesicle budding from the Golgi. Thereby, may play a role in Golgi membrane trafficking and could indirectly give its flattened shape to the Golgi apparatus. Alternatively, in concert with LURAP1 and CDC42BPA/CDC42BPB, has been involved in modulating lamellar actomyosin retrograde flow that is crucial to cell protrusion and migration. May be involved in the maintenance of the stromal cell architectures required for cell to cell contact. Regulates trafficking, expression, and activation of innate immune receptors on macrophages. Plays a role to suppress inflammatory responsiveness of macrophages via a mechanism that modulates CD14 trafficking. Acts as a receptor of surfactant-associated protein A (SFTPA1/SP-A) and plays an important role in internalization and clearance of SFTPA1-opsonized S.aureus by alveolar macrophages. Strongly enhances natural killer cell cytotoxicity. The chain is Unconventional myosin-XVIIIa (Myo18a) from Mus musculus (Mouse).